Here is a 295-residue protein sequence, read N- to C-terminus: Multistep phosphorelay regulator 1 (295 aa).

The interval 89–110 (KSENNQQLAANETAGAPEGTEE) is disordered. The span at 97-106 (AANETAGAPE) shows a compositional bias: low complexity. Residues 182–284 (EHEFSKSIVW…NDFYKDARAY (103 aa)) form the HPt domain. A Phosphohistidine modification is found at His221.

Binds to the msc4 response regulator which is part of a multistep phosphorelay system that transmits oxidative stress signals to the spc1 MAPK cascade. The chain is Multistep phosphorelay regulator 1 (mpr1) from Schizosaccharomyces pombe (strain 972 / ATCC 24843) (Fission yeast).